A 154-amino-acid polypeptide reads, in one-letter code: 3-dehydroquinate dehydratase 2 (154 aa).

Tyrosine 23 serves as the catalytic Proton acceptor. Positions 79, 85, and 92 each coordinate substrate. The active-site Proton donor is histidine 105. Residues 106-107 and arginine 116 contribute to the substrate site; that span reads IS.

The protein belongs to the type-II 3-dehydroquinase family. Homododecamer.

The enzyme catalyses 3-dehydroquinate = 3-dehydroshikimate + H2O. It participates in metabolic intermediate biosynthesis; chorismate biosynthesis; chorismate from D-erythrose 4-phosphate and phosphoenolpyruvate: step 3/7. Its function is as follows. Catalyzes a trans-dehydration via an enolate intermediate. In Ralstonia nicotianae (strain ATCC BAA-1114 / GMI1000) (Ralstonia solanacearum), this protein is 3-dehydroquinate dehydratase 2 (aroQ2).